Here is a 1072-residue protein sequence, read N- to C-terminus: DNA-directed RNA polymerase subunit beta (1072 aa).

Belongs to the RNA polymerase beta chain family. In plastids the minimal PEP RNA polymerase catalytic core is composed of four subunits: alpha, beta, beta', and beta''. When a (nuclear-encoded) sigma factor is associated with the core the holoenzyme is formed, which can initiate transcription.

It is found in the plastid. The protein localises to the chloroplast. It catalyses the reaction RNA(n) + a ribonucleoside 5'-triphosphate = RNA(n+1) + diphosphate. Its function is as follows. DNA-dependent RNA polymerase catalyzes the transcription of DNA into RNA using the four ribonucleoside triphosphates as substrates. This is DNA-directed RNA polymerase subunit beta from Barbarea verna (Land cress).